Reading from the N-terminus, the 406-residue chain is Type II secretion system protein F (406 aa).

At 1–171 the chain is on the cytoplasmic side; the sequence is MAAFEYKALD…KMRSKLQQAM (171 aa). Positions 97, 151, and 155 each coordinate Ca(2+). The helical transmembrane segment at 172 to 192 threads the bilayer; the sequence is IYPVVLVVFAVGIVAFLLAAV. At 193–223 the chain is on the periplasmic side; that stretch reads VPKIVGQFVQMGQALPASTQFLLDASDFLQH. A helical transmembrane segment spans residues 224–244; sequence WGISLLVGLLMLIYLVRWLLT. At 245–368 the chain is on the cytoplasmic side; that stretch reads KPDIRLRWDR…QDNSFESTVN (124 aa). Residues 369 to 389 traverse the membrane as a helical segment; sequence IALGIFTPALIALMAGMVLFI. Topologically, residues 390–406 are periplasmic; that stretch reads VMATLMPILEMNNLMSR.

Belongs to the GSP F family. Type II secretion system is composed of four main components: the outer membrane complex, the inner membrane complex, the cytoplasmic secretion ATPase and the periplasm-spanning pseudopilus. Homodimer. Interacts with EpsE/GspE and EpsL/GspL components.

It localises to the cell inner membrane. Functionally, component of the type II secretion system inner membrane complex required for the energy-dependent secretion of extracellular factors such as proteases and toxins from the periplasm. The chain is Type II secretion system protein F (epsF) from Vibrio cholerae serotype O1 (strain ATCC 39315 / El Tor Inaba N16961).